The primary structure comprises 200 residues: Probable nicotinate-nucleotide adenylyltransferase (200 aa).

The protein belongs to the NadD family.

The enzyme catalyses nicotinate beta-D-ribonucleotide + ATP + H(+) = deamido-NAD(+) + diphosphate. It functions in the pathway cofactor biosynthesis; NAD(+) biosynthesis; deamido-NAD(+) from nicotinate D-ribonucleotide: step 1/1. Catalyzes the reversible adenylation of nicotinate mononucleotide (NaMN) to nicotinic acid adenine dinucleotide (NaAD). In Lachnoclostridium phytofermentans (strain ATCC 700394 / DSM 18823 / ISDg) (Clostridium phytofermentans), this protein is Probable nicotinate-nucleotide adenylyltransferase.